We begin with the raw amino-acid sequence, 305 residues long: GMP synthase [glutamine-hydrolyzing] subunit B (305 aa).

A GMPS ATP-PPase domain is found at 2-184 (VNIEKFIDQA…LGLPAEIQHR (183 aa)). 29–35 (SGGVDSS) is a binding site for ATP.

As to quaternary structure, heterodimer composed of a glutamine amidotransferase subunit (A) and a GMP-binding subunit (B).

The catalysed reaction is XMP + L-glutamine + ATP + H2O = GMP + L-glutamate + AMP + diphosphate + 2 H(+). It functions in the pathway purine metabolism; GMP biosynthesis; GMP from XMP (L-Gln route): step 1/1. Functionally, catalyzes the synthesis of GMP from XMP. The sequence is that of GMP synthase [glutamine-hydrolyzing] subunit B from Methanoculleus marisnigri (strain ATCC 35101 / DSM 1498 / JR1).